We begin with the raw amino-acid sequence, 415 residues long: Lipoyl synthase, mitochondrial (415 aa).

The N-terminal 32 residues, 1–32 (MAASTNRLRFLYSSARTVPQTGSITPISRRTY), are a transit peptide targeting the mitochondrion. A compositionally biased stretch (polar residues) spans 22–32 (GSITPISRRTY). The tract at residues 22–53 (GSITPISRRTYATTEPSPSATGAPATARKRTN) is disordered. Residues 33 to 47 (ATTEPSPSATGAPAT) are compositionally biased toward low complexity. [4Fe-4S] cluster-binding residues include Cys132, Cys137, Cys143, Cys163, Cys167, Cys170, and Ser378. The Radical SAM core domain maps to 146–367 (GSDKSAATAT…RQRALDMGFL (222 aa)). The interval 395 to 415 (AAGTAGESVTDSKAAVDEATR) is disordered.

It belongs to the radical SAM superfamily. Lipoyl synthase family. [4Fe-4S] cluster serves as cofactor.

It is found in the mitochondrion. The catalysed reaction is [[Fe-S] cluster scaffold protein carrying a second [4Fe-4S](2+) cluster] + N(6)-octanoyl-L-lysyl-[protein] + 2 oxidized [2Fe-2S]-[ferredoxin] + 2 S-adenosyl-L-methionine + 4 H(+) = [[Fe-S] cluster scaffold protein] + N(6)-[(R)-dihydrolipoyl]-L-lysyl-[protein] + 4 Fe(3+) + 2 hydrogen sulfide + 2 5'-deoxyadenosine + 2 L-methionine + 2 reduced [2Fe-2S]-[ferredoxin]. It functions in the pathway protein modification; protein lipoylation via endogenous pathway; protein N(6)-(lipoyl)lysine from octanoyl-[acyl-carrier-protein]: step 2/2. In terms of biological role, catalyzes the radical-mediated insertion of two sulfur atoms into the C-6 and C-8 positions of the octanoyl moiety bound to the lipoyl domains of lipoate-dependent enzymes, thereby converting the octanoylated domains into lipoylated derivatives. This is Lipoyl synthase, mitochondrial from Aspergillus oryzae (strain ATCC 42149 / RIB 40) (Yellow koji mold).